Reading from the N-terminus, the 452-residue chain is Trigger factor (452 aa).

The 87-residue stretch at 170-256 (NSIVKVDFVE…IKSIKKRDLP (87 aa)) folds into the PPIase FKBP-type domain.

This sequence belongs to the FKBP-type PPIase family. Tig subfamily.

It localises to the cytoplasm. The catalysed reaction is [protein]-peptidylproline (omega=180) = [protein]-peptidylproline (omega=0). Functionally, involved in protein export. Acts as a chaperone by maintaining the newly synthesized protein in an open conformation. Functions as a peptidyl-prolyl cis-trans isomerase. This chain is Trigger factor, found in Borrelia garinii subsp. bavariensis (strain ATCC BAA-2496 / DSM 23469 / PBi) (Borreliella bavariensis).